Reading from the N-terminus, the 643-residue chain is Phosphomethylpyrimidine synthase (643 aa).

Substrate is bound by residues N248, M277, Y306, H342, 362–364 (SRG), 403–406 (DGLR), and E442. A Zn(2+)-binding site is contributed by H446. Y469 is a binding site for substrate. Residue H510 coordinates Zn(2+). 3 residues coordinate [4Fe-4S] cluster: C590, C593, and C598.

It belongs to the ThiC family. In terms of assembly, homodimer. [4Fe-4S] cluster serves as cofactor.

The catalysed reaction is 5-amino-1-(5-phospho-beta-D-ribosyl)imidazole + S-adenosyl-L-methionine = 4-amino-2-methyl-5-(phosphooxymethyl)pyrimidine + CO + 5'-deoxyadenosine + formate + L-methionine + 3 H(+). It functions in the pathway cofactor biosynthesis; thiamine diphosphate biosynthesis. Catalyzes the synthesis of the hydroxymethylpyrimidine phosphate (HMP-P) moiety of thiamine from aminoimidazole ribotide (AIR) in a radical S-adenosyl-L-methionine (SAM)-dependent reaction. The chain is Phosphomethylpyrimidine synthase from Burkholderia orbicola (strain MC0-3).